The sequence spans 162 residues: Probable chemoreceptor glutamine deamidase CheD (162 aa).

The protein belongs to the CheD family.

The enzyme catalyses L-glutaminyl-[protein] + H2O = L-glutamyl-[protein] + NH4(+). Functionally, probably deamidates glutamine residues to glutamate on methyl-accepting chemotaxis receptors (MCPs), playing an important role in chemotaxis. In Clostridium botulinum (strain Eklund 17B / Type B), this protein is Probable chemoreceptor glutamine deamidase CheD.